A 170-amino-acid chain; its full sequence is Myosin regulatory light chain 2 (170 aa).

Over residues M1–R13 the composition is skewed to basic residues. The segment at M1–D22 is disordered. 2 consecutive EF-hand domains span residues K24–I59 and D93–E128. Positions 37, 39, 41, and 48 each coordinate Ca(2+).

As to quaternary structure, myosin is a hexamer of 2 heavy chains and 4 light chains (two regulatory light chains and two essential light chains).

The sequence is that of Myosin regulatory light chain 2 (mlc-2) from Caenorhabditis elegans.